Here is a 281-residue protein sequence, read N- to C-terminus: MRVVHTINELRQALAATRPAALVPTMGSLHEGHLALVKQARDHGGPVVASIFVNRLQFAPHEDFDRYPRTLERDCDLLKGVGCNLVFAPTESELYPEPQTYKVQPPGELADVLEGAFRPGFFTGVCTVVMKLFQCVQPRVAVFGKKDYQQLMVLRGMVRQFALPIEIVAVDTARADDGLALSSRNAYLSEPERAEAPQLAATLHTVQAAVLAAVKSGARIDAAALEAQAMGTLRSRGWAPDYVALRRSSDLQAPADPTAEPLVVLAAARLGKTRLIDNLEI.

26-33 (MGSLHEGH) contributes to the ATP binding site. Histidine 33 serves as the catalytic Proton donor. Residue glutamine 57 participates in (R)-pantoate binding. Residue glutamine 57 participates in beta-alanine binding. ATP is bound at residue 144-147 (GKKD). Residue glutamine 150 participates in (R)-pantoate binding. ATP contacts are provided by residues alanine 173 and 181 to 184 (LSSR).

It belongs to the pantothenate synthetase family. Homodimer.

The protein resides in the cytoplasm. The enzyme catalyses (R)-pantoate + beta-alanine + ATP = (R)-pantothenate + AMP + diphosphate + H(+). It participates in cofactor biosynthesis; (R)-pantothenate biosynthesis; (R)-pantothenate from (R)-pantoate and beta-alanine: step 1/1. Functionally, catalyzes the condensation of pantoate with beta-alanine in an ATP-dependent reaction via a pantoyl-adenylate intermediate. This Methylibium petroleiphilum (strain ATCC BAA-1232 / LMG 22953 / PM1) protein is Pantothenate synthetase.